We begin with the raw amino-acid sequence, 322 residues long: Glucokinase (322 aa).

10 to 15 (GDIGGT) provides a ligand contact to ATP.

Belongs to the bacterial glucokinase family.

The protein localises to the cytoplasm. The catalysed reaction is D-glucose + ATP = D-glucose 6-phosphate + ADP + H(+). The polypeptide is Glucokinase (Hahella chejuensis (strain KCTC 2396)).